A 237-amino-acid polypeptide reads, in one-letter code: uncharacterized protein (237 aa).

Glu-91, Glu-93, and Asp-122 together coordinate a divalent metal cation.

The protein belongs to the FAH family.

This is an uncharacterized protein from Methanocaldococcus jannaschii (strain ATCC 43067 / DSM 2661 / JAL-1 / JCM 10045 / NBRC 100440) (Methanococcus jannaschii).